A 156-amino-acid chain; its full sequence is Ribosome maturation factor RimP (156 aa).

The protein belongs to the RimP family.

It localises to the cytoplasm. Functionally, required for maturation of 30S ribosomal subunits. The chain is Ribosome maturation factor RimP from Lachnospira eligens (strain ATCC 27750 / DSM 3376 / VPI C15-48 / C15-B4) (Eubacterium eligens).